Reading from the N-terminus, the 349-residue chain is Phenylalanine--tRNA ligase alpha subunit (349 aa).

Glu-259 serves as a coordination point for Mg(2+).

It belongs to the class-II aminoacyl-tRNA synthetase family. Phe-tRNA synthetase alpha subunit type 1 subfamily. In terms of assembly, tetramer of two alpha and two beta subunits. Mg(2+) is required as a cofactor.

Its subcellular location is the cytoplasm. The enzyme catalyses tRNA(Phe) + L-phenylalanine + ATP = L-phenylalanyl-tRNA(Phe) + AMP + diphosphate + H(+). The protein is Phenylalanine--tRNA ligase alpha subunit of Lactobacillus delbrueckii subsp. bulgaricus (strain ATCC 11842 / DSM 20081 / BCRC 10696 / JCM 1002 / NBRC 13953 / NCIMB 11778 / NCTC 12712 / WDCM 00102 / Lb 14).